The chain runs to 2410 residues: Cell wall alpha-1,3-glucan synthase ags1 (2410 aa).

A phosphoserine mark is found at Ser1643, Ser1644, and Ser1651. Thr1653 bears the Phosphothreonine mark. The interval 1685-1706 (SLSLGSRRGPGHTTEDDASDGL) is disordered. A phosphoserine mark is found at Ser1738 and Ser1812. The interval 1796–1827 (QDDLSDPARSVDSDSVSPPLPPFVAGSNPNAR) is disordered. Residues 1802–1827 (PARSVDSDSVSPPLPPFVAGSNPNAR) are compositionally biased toward low complexity.

This sequence belongs to the glycosyltransferase group 1 family. As to quaternary structure, interacts with sad1.

It carries out the reaction [(1-&gt;3)-alpha-D-glucosyl](n) + UDP-alpha-D-glucose = [(1-&gt;3)-alpha-D-glucosyl](n+1) + UDP + H(+). Its function is as follows. Required for alpha-1,3-glucan and alpha-1,4-glucan production which are required for cell wall synthesis. The sequence is that of Cell wall alpha-1,3-glucan synthase ags1 (ags1) from Schizosaccharomyces pombe (strain 972 / ATCC 24843) (Fission yeast).